We begin with the raw amino-acid sequence, 492 residues long: Bifunctional shikimate kinase/3-dehydroquinate synthase (492 aa).

Residues 1 to 161 (MRIFLVGMMG…TALVVLEALD (161 aa)) are shikimate kinase. Position 10-15 (10-15 (GSGKST)) interacts with ATP. Ser14 contacts Mg(2+). Residues Asp32, Arg56, and Gly78 each coordinate substrate. Arg114 contacts ATP. Arg131 provides a ligand contact to substrate. The interval 162-492 (EKEISTIEKP…DPLELLEVVD (331 aa)) is 3-dehydroquinate synthase.

In the N-terminal section; belongs to the shikimate kinase family. It in the C-terminal section; belongs to the sugar phosphate cyclases superfamily. Dehydroquinate synthase family. Mg(2+) is required as a cofactor. Requires NAD(+) as cofactor. A divalent metal cation serves as cofactor.

It localises to the cytoplasm. The enzyme catalyses 7-phospho-2-dehydro-3-deoxy-D-arabino-heptonate = 3-dehydroquinate + phosphate. The catalysed reaction is shikimate + ATP = 3-phosphoshikimate + ADP + H(+). The protein operates within metabolic intermediate biosynthesis; chorismate biosynthesis; chorismate from D-erythrose 4-phosphate and phosphoenolpyruvate: step 2/7. Its pathway is metabolic intermediate biosynthesis; chorismate biosynthesis; chorismate from D-erythrose 4-phosphate and phosphoenolpyruvate: step 5/7. Functionally, catalyzes the specific phosphorylation of the 3-hydroxyl group of shikimic acid using ATP as a cosubstrate. In Thermotoga maritima (strain ATCC 43589 / DSM 3109 / JCM 10099 / NBRC 100826 / MSB8), this protein is Bifunctional shikimate kinase/3-dehydroquinate synthase (aroKB).